The primary structure comprises 491 residues: GTPase Der (491 aa).

The region spanning Ala3–Asp178 is the EngA-type G 1 domain. Residues Gly9–Ser16, Asp57–Ile61, and Asn130–Asp133 each bind GTP. The segment covering Asp198 to Glu224 has biased composition (acidic residues). The interval Asp198–Ala225 is disordered. The region spanning Leu227 to Ser400 is the EngA-type G 2 domain. GTP-binding positions include Gly233–Ser240, Asp280–Val284, and Asn345–Asp348. Residues Val401 to His485 enclose the KH-like domain.

The protein belongs to the TRAFAC class TrmE-Era-EngA-EngB-Septin-like GTPase superfamily. EngA (Der) GTPase family. In terms of assembly, associates with the 50S ribosomal subunit.

GTPase that plays an essential role in the late steps of ribosome biogenesis. The polypeptide is GTPase Der (Nitratidesulfovibrio vulgaris (strain ATCC 29579 / DSM 644 / CCUG 34227 / NCIMB 8303 / VKM B-1760 / Hildenborough) (Desulfovibrio vulgaris)).